Consider the following 357-residue polypeptide: Ribosomal RNA large subunit methyltransferase F (357 aa).

Positions 1–15 are enriched in polar residues; sequence MPKPPRSTQILSCNA. The disordered stretch occupies residues 1-33; the sequence is MPKPPRSTQILSCNAPNGKPKTQHPSARAKVKR.

Belongs to the methyltransferase superfamily. METTL16/RlmF family.

The protein localises to the cytoplasm. It catalyses the reaction adenosine(1618) in 23S rRNA + S-adenosyl-L-methionine = N(6)-methyladenosine(1618) in 23S rRNA + S-adenosyl-L-homocysteine + H(+). Its function is as follows. Specifically methylates the adenine in position 1618 of 23S rRNA. The chain is Ribosomal RNA large subunit methyltransferase F from Shewanella putrefaciens (strain CN-32 / ATCC BAA-453).